The chain runs to 303 residues: uncharacterized protein (303 aa).

This is an uncharacterized protein from Haemophilus influenzae (strain ATCC 51907 / DSM 11121 / KW20 / Rd).